The primary structure comprises 349 residues: 5-deoxyribose 1-phosphate isomerase (349 aa).

Substrate contacts are provided by residues 49-51, Arg-92, and Gln-199; that span reads RGA. Asp-240 (proton donor) is an active-site residue. 250-251 contributes to the substrate binding site; it reads NK.

The protein belongs to the EIF-2B alpha/beta/delta subunits family. DrdI subfamily.

It catalyses the reaction 5-deoxy-alpha-D-ribose 1-phosphate = 5-deoxy-D-ribulose 1-phosphate. It functions in the pathway carbohydrate degradation. Catalyzes the isomerization of 5-deoxy-alpha-D-ribose 1-phosphate to 5-deoxy-D-ribulose 1-phosphate, as part of a 5-deoxyribose salvage pathway that recycles this toxic radical SAM enzyme by-product to mainstream metabolites. The chain is 5-deoxyribose 1-phosphate isomerase from Clostridium botulinum (strain Okra / Type B1).